Consider the following 784-residue polypeptide: Lon protease (784 aa).

Residues 11-204 (IPVLPLRDVV…YLMAMMESEI (194 aa)) enclose the Lon N-terminal domain. 356–363 (GPPGVGKT) serves as a coordination point for ATP. The Lon proteolytic domain maps to 592–773 (ENRVGQVTGL…EEVLTLALQN (182 aa)). Residues Ser-679 and Lys-722 contribute to the active site.

The protein belongs to the peptidase S16 family. Homohexamer. Organized in a ring with a central cavity. ATP binding and hydrolysis do not affect the oligomeric state of the enzyme.

Its subcellular location is the cytoplasm. It carries out the reaction Hydrolysis of proteins in presence of ATP.. With respect to regulation, contains an allosteric site (distinct from its active site), whose occupancy by an unfolded polypeptide leads to enzyme activation. ATP-dependent serine protease that mediates the selective degradation of mutant and abnormal proteins as well as certain short-lived regulatory proteins. Required for cellular homeostasis and for survival from DNA damage and developmental changes induced by stress. Degrades polypeptides processively to yield small peptide fragments that are 5 to 10 amino acids long. Binds to DNA in a double-stranded, site-specific manner. Endogenous substrates include the regulatory proteins RcsA and SulA, the transcriptional activator SoxS, and UmuD. Its overproduction specifically inhibits translation through at least two different pathways, one of them being the YoeB-YefM toxin-antitoxin system. This is Lon protease from Escherichia coli O6:H1 (strain CFT073 / ATCC 700928 / UPEC).